Here is a 279-residue protein sequence, read N- to C-terminus: Probable endonuclease 4 (279 aa).

Residues His74, His112, Glu147, Asp180, His183, His214, Asp227, His229, and Glu259 each coordinate Zn(2+).

The protein belongs to the AP endonuclease 2 family. The cofactor is Zn(2+).

The enzyme catalyses Endonucleolytic cleavage to 5'-phosphooligonucleotide end-products.. Endonuclease IV plays a role in DNA repair. It cleaves phosphodiester bonds at apurinic or apyrimidinic (AP) sites, generating a 3'-hydroxyl group and a 5'-terminal sugar phosphate. The polypeptide is Probable endonuclease 4 (Mycoplasma mobile (strain ATCC 43663 / 163K / NCTC 11711) (Mesomycoplasma mobile)).